Consider the following 191-residue polypeptide: Potassium-transporting ATPase KdpC subunit (191 aa).

A helical membrane pass occupies residues 6–26; sequence PAILLFILLTLVTGGLYPLLT.

It belongs to the KdpC family. As to quaternary structure, the system is composed of three essential subunits: KdpA, KdpB and KdpC.

The protein localises to the cell inner membrane. In terms of biological role, part of the high-affinity ATP-driven potassium transport (or Kdp) system, which catalyzes the hydrolysis of ATP coupled with the electrogenic transport of potassium into the cytoplasm. This subunit acts as a catalytic chaperone that increases the ATP-binding affinity of the ATP-hydrolyzing subunit KdpB by the formation of a transient KdpB/KdpC/ATP ternary complex. This chain is Potassium-transporting ATPase KdpC subunit, found in Enterobacter sp. (strain 638).